Here is a 567-residue protein sequence, read N- to C-terminus: Interleukin-1 receptor-like 1 (567 aa).

An N-terminal signal peptide occupies residues 1 to 26; that stretch reads MIDRQRMGLWALAILTLPMYLTVTEG. Ig-like C2-type domains lie at 27-109 and 120-203; these read SKSS…LNVT and PDYL…VTAT. The Extracellular segment spans residues 27–332; that stretch reads SKSSWGLENE…LRRKQPIDHR (306 aa). Cysteines 42 and 93 form a disulfide. Residues N60, N101, N107, N146, N176, and N194 are each glycosylated (N-linked (GlcNAc...) asparagine). 2 disulfide bridges follow: C117–C157 and C139–C187. The tract at residues 204 to 216 is flexible linker; the sequence is RSFTVEEKGFSMF. The region spanning 217-324 is the Ig-like C2-type 3 domain; it reads PVITNPPYNH…GMIRHTIRLR (108 aa). N-linked (GlcNAc...) asparagine glycans are attached at residues N225, N259, and N278. Intrachain disulfides connect C240–C308 and C243–C287. K326 participates in a covalent cross-link: Glycyl lysine isopeptide (Lys-Gly) (interchain with G-Cter in ubiquitin). A helical transmembrane segment spans residues 333 to 355; sequence SIYYIVAGCSLLLMFINVLVIVL. Over 356–567 the chain is Cytoplasmic; it reads KVFWIEVALF…GKACLDLKHF (212 aa). Residues 380 to 540 form the TIR domain; that stretch reads KLYDAYIIYP…KFWKHVRYQM (161 aa). Phosphoserine; by GSK3-beta is present on S442. E466 is a catalytic residue.

This sequence belongs to the interleukin-1 receptor family. As to quaternary structure, interacts with MYD88, IRAK1, IRAK4, and TRAF6. Bound to its ligand IL33, interacts with IL1RAP to form the minimal interleukin-33 signaling complex with a 1:1:1 stoichiometry. Interacts with KIT (bound to KITLG/SCF). A mast cell-specific KITLG/SCF-induced interleukin-33 signaling complex contains IL1RL1, IL1RAP, KIT and MYD88. Interacts with TMED1. Post-translationally, phosphorylated by GSK3B at Ser-442; leading to proteasomal degradation. Ubiquitinated at Lys-326 in a FBXL19-mediated manner; leading to proteasomal degradation. Ubiquitination by TRAF6 via 'Lys-27'-linked polyubiquitination and deubiquitination by USP38 serves as a critical regulatory mechanism for fine-tuning IL1RL1-mediated inflammatory response. As to expression, predominantly expressed in hematopoietic tissues, and in macrophage, erythroid, epithelial and fibroblast cell lines. Isoform A is expressed in brain astrocytes and microglia. Isoform B is expressed in brain endothelial cells.

The protein resides in the cell membrane. It is found in the secreted. The catalysed reaction is NAD(+) + H2O = ADP-D-ribose + nicotinamide + H(+). Receptor for interleukin-33 (IL-33) which plays crucial roles in innate and adaptive immunity, contributing to tissue homeostasis and responses to environmental stresses together with coreceptor IL1RAP. Its stimulation recruits MYD88, IRAK1, IRAK4, and TRAF6, followed by phosphorylation of MAPK3/ERK1 and/or MAPK1/ERK2, MAPK14, and MAPK8. Possibly involved in helper T-cell function. Upon tissue injury, induces UCP2-dependent mitochondrial rewiring that attenuates the generation of reactive oxygen species and preserves the integrity of Krebs cycle required for persistent production of itaconate and subsequent GATA3-dependent differentiation of inflammation-resolving alternatively activated macrophages. In terms of biological role, inhibits IL-33 signaling. This Mus musculus (Mouse) protein is Interleukin-1 receptor-like 1 (Il1rl1).